The chain runs to 137 residues: Large ribosomal subunit protein uL16 (137 aa).

This sequence belongs to the universal ribosomal protein uL16 family. In terms of assembly, part of the 50S ribosomal subunit.

Its function is as follows. Binds 23S rRNA and is also seen to make contacts with the A and possibly P site tRNAs. This Lawsonia intracellularis (strain PHE/MN1-00) protein is Large ribosomal subunit protein uL16.